The chain runs to 143 residues: Hemoglobin subunit alpha (143 aa).

An N-acetylserine modification is found at S2. The region spanning 2–143 (SLSDTDKAVV…LALALSEKYR (142 aa)) is the Globin domain. H60 is a binding site for O2. H89 is a heme b binding site.

The protein belongs to the globin family. In terms of assembly, heterotetramer of two alpha chains and two beta chains. As to expression, red blood cells.

Functionally, involved in oxygen transport from gills to the various peripheral tissues. The polypeptide is Hemoglobin subunit alpha (hbaa1) (Danio rerio (Zebrafish)).